An 84-amino-acid polypeptide reads, in one-letter code: Acid stress protein IbaG (84 aa).

This sequence belongs to the BolA/IbaG family.

In terms of biological role, involved in cell resistance against acid stress. The sequence is that of Acid stress protein IbaG from Escherichia coli O6:H1 (strain CFT073 / ATCC 700928 / UPEC).